We begin with the raw amino-acid sequence, 185 residues long: Photosystem I assembly protein Ycf4 (185 aa).

The next 2 membrane-spanning stretches (helical) occupy residues 22-42 (FFFA…GFSS) and 57-77 (IIFV…LFFS).

It belongs to the Ycf4 family.

The protein resides in the plastid. The protein localises to the chloroplast thylakoid membrane. Seems to be required for the assembly of the photosystem I complex. In Welwitschia mirabilis (Tree tumbo), this protein is Photosystem I assembly protein Ycf4.